Here is a 118-residue protein sequence, read N- to C-terminus: Large ribosomal subunit protein uL24 (118 aa).

It belongs to the universal ribosomal protein uL24 family. As to quaternary structure, part of the 50S ribosomal subunit.

Functionally, one of two assembly initiator proteins, it binds directly to the 5'-end of the 23S rRNA, where it nucleates assembly of the 50S subunit. Its function is as follows. One of the proteins that surrounds the polypeptide exit tunnel on the outside of the subunit. The sequence is that of Large ribosomal subunit protein uL24 from Synechococcus sp. (strain CC9605).